The following is a 392-amino-acid chain: Stilbene synthase 6 (392 aa).

Position 55-58 (55-58 (KFNR)) interacts with substrate. Residue Cys-164 is part of the active site. Residues Leu-267 and 305–307 (GGP) each bind substrate.

This sequence belongs to the thiolase-like superfamily. Chalcone/stilbene synthases family. As to quaternary structure, homodimer.

The protein localises to the cytoplasm. The catalysed reaction is 4-coumaroyl-CoA + 3 malonyl-CoA + 3 H(+) = trans-resveratrol + 4 CO2 + 4 CoA. The protein operates within phytoalexin biosynthesis; 3,4',5-trihydroxystilbene biosynthesis; 3,4',5-trihydroxystilbene from trans-4-coumarate: step 2/2. Functionally, mediates resistance to pathogens which are sensitive to stilbenes. In Vitis vinifera (Grape), this protein is Stilbene synthase 6 (STS).